Here is a 285-residue protein sequence, read N- to C-terminus: Pantothenate synthetase (285 aa).

30 to 37 (MGNLHDGH) is an ATP binding site. Catalysis depends on H37, which acts as the Proton donor. Q61 provides a ligand contact to (R)-pantoate. Q61 provides a ligand contact to beta-alanine. 148 to 151 (GEKD) lines the ATP pocket. A (R)-pantoate-binding site is contributed by Q154. ATP is bound at residue 185–188 (RSSR).

This sequence belongs to the pantothenate synthetase family. In terms of assembly, homodimer.

It is found in the cytoplasm. The enzyme catalyses (R)-pantoate + beta-alanine + ATP = (R)-pantothenate + AMP + diphosphate + H(+). It participates in cofactor biosynthesis; (R)-pantothenate biosynthesis; (R)-pantothenate from (R)-pantoate and beta-alanine: step 1/1. Functionally, catalyzes the condensation of pantoate with beta-alanine in an ATP-dependent reaction via a pantoyl-adenylate intermediate. The protein is Pantothenate synthetase of Alcanivorax borkumensis (strain ATCC 700651 / DSM 11573 / NCIMB 13689 / SK2).